Consider the following 316-residue polypeptide: Porphobilinogen deaminase (316 aa).

S-(dipyrrolylmethanemethyl)cysteine is present on Cys245.

This sequence belongs to the HMBS family. As to quaternary structure, monomer. Requires dipyrromethane as cofactor.

The enzyme catalyses 4 porphobilinogen + H2O = hydroxymethylbilane + 4 NH4(+). It functions in the pathway porphyrin-containing compound metabolism; protoporphyrin-IX biosynthesis; coproporphyrinogen-III from 5-aminolevulinate: step 2/4. Its pathway is porphyrin-containing compound metabolism; chlorophyll biosynthesis. Tetrapolymerization of the monopyrrole PBG into the hydroxymethylbilane pre-uroporphyrinogen in several discrete steps. This Prochlorococcus marinus (strain MIT 9515) protein is Porphobilinogen deaminase.